The sequence spans 88 residues: Large ribosomal subunit protein bL27 (88 aa).

The span at 1 to 13 shows a compositional bias: polar residues; the sequence is MATKKGASSSSNG. Positions 1-25 are disordered; that stretch reads MATKKGASSSSNGRDSEAKRLGVKR.

It belongs to the bacterial ribosomal protein bL27 family.

In Corynebacterium efficiens (strain DSM 44549 / YS-314 / AJ 12310 / JCM 11189 / NBRC 100395), this protein is Large ribosomal subunit protein bL27.